The following is a 73-amino-acid chain: Large ribosomal subunit protein bL31 (73 aa).

Zn(2+) is bound by residues Cys16, Cys18, Cys37, and Cys40.

Belongs to the bacterial ribosomal protein bL31 family. Type A subfamily. Part of the 50S ribosomal subunit. Zn(2+) is required as a cofactor.

Its function is as follows. Binds the 23S rRNA. The protein is Large ribosomal subunit protein bL31 of Pseudomonas syringae pv. syringae (strain B728a).